Here is a 62-residue protein sequence, read N- to C-terminus: Small ribosomal subunit protein eS27 (62 aa).

The Zn(2+) site is built by Cys-17, Cys-20, Cys-36, and Cys-39. A C4-type zinc finger spans residues 17–39 (CPDCENEQIIFEKASTVVDCVVC).

It belongs to the eukaryotic ribosomal protein eS27 family. Part of the 30S ribosomal subunit. Zn(2+) is required as a cofactor.

The sequence is that of Small ribosomal subunit protein eS27 from Methanosphaerula palustris (strain ATCC BAA-1556 / DSM 19958 / E1-9c).